Reading from the N-terminus, the 174-residue chain is Chaperonin-like RBCX protein 1, chloroplastic (174 aa).

Residues 1–45 (MESSSSLLHHSYLSYLNPKFGKRPLVSYPLMQSSRKCKQTRICSN) constitute a chloroplast transit peptide.

It belongs to the RbcX family. Homodimer. Interacts with rbcL, atpB and THI1.

The protein localises to the plastid. The protein resides in the chloroplast. Chaperone involved in RuBisCO assembly process. The sequence is that of Chaperonin-like RBCX protein 1, chloroplastic from Arabidopsis thaliana (Mouse-ear cress).